The chain runs to 1080 residues: MDFSWTTGWEKAAADDDEAESAPAPAPPAPSPQEAAESMILVPGPRVVLSGLMRGDCRADDSVLFINAGGSATEGCEPSSKLSEDSFFEGGDAIETSEDIVEGGDYPSLYHSARYGNFSYKIDGLAPGDYFLDLHFAEIVNTYGPKGIRAFDVLVQEEKANTLTHILSELDVYAVVGGNRPLQVRDIRVTVESDSAIVINFKGVRGSPMVCGICIRKRVAMAVTDMVTEGNVLCKRCSAHTGNSPLQTRTSKLISKYEKQIEELTNQCNMKSDECYMAWSSVESTNQELERLKIELHQKVMQSDNIEQVVDRQADQLRSVSQKYENAKKLWAAAISNLENKIKAMKQEQTLLSLEAHDCANAVPDLSKMIGAVQTLVAQCEDLKLKYYEEMAKRKKLHNIVEETKGNIRVFCRCRPLSKDETSSGYKCAVDFDGAKDGDIAIVNGGAAKKTFKFDRVYMPTDNQADVYADASPLVTSVLDGYNVCIFAYGQTGTGKTFTMEGTERNRGVNYRTLEELFKIAEERKETVTYSISVSVLEVYNEQIRDLLASSPSSKKLEIKQASEGSHHVPGIVEAKVENIKEVWDVLQAGSNARAVGSNNVNEHSSRSHCMLCIMVRAENLMNGECTRSKLWLVDLAGSERLAKTDVQGERLKEAQNINRSLSALGDVISALATKNSHIPYRNSKLTHLLQDSLGGDSKALMFVQISPSNNDVSETLSSLNFASRVRRIELGPAKKQVDTAELQKVKQMLERAKQDIRLKDDSLRKLEDNCQNLENKAKGKEQFYKNLQEKVKELESQLDSKMHSQITSEKQQNELFGKLKEKEEMCTTLQQKIAEESEHKLRLQQQSESEIKELELKLKEQEHHRSVAESKIKELELKLKEQEHHRSVAESKAMEIGQELLETQRTEAMLQIKPRDLENNLQERTTLQDTNMILDSTNCMRVASTPGEAKAHLLTREEAMSEKEQHILRSSDSMNKKVTNNSSIVGAPEVVNEKKRKGDARNSSIGGELENQPVGSQNASRKRSLQGEPRLKRKSTEPLKNPGRVTATSKTAAATHKTGPVTRATRQQPAVNKTRGWVR.

Positions 1–35 are disordered; it reads MDFSWTTGWEKAAADDDEAESAPAPAPPAPSPQEA. Residues 247–355 are a coiled coil; the sequence is QTRTSKLISK…KQEQTLLSLE (109 aa). The Kinesin motor domain maps to 407–729; it reads NIRVFCRCRP…LNFASRVRRI (323 aa). Position 490–497 (490–497) interacts with ATP; the sequence is GQTGTGKT. Positions 736-893 form a coiled coil; it reads KQVDTAELQK…EHHRSVAESK (158 aa). The span at 960 to 970 shows a compositional bias: basic and acidic residues; that stretch reads AMSEKEQHILR. The interval 960–1080 is disordered; that stretch reads AMSEKEQHIL…AVNKTRGWVR (121 aa). Positions 971-985 are enriched in polar residues; the sequence is SSDSMNKKVTNNSSI. Residues 1047 to 1059 show a composition bias toward low complexity; sequence TATSKTAAATHKT.

This sequence belongs to the TRAFAC class myosin-kinesin ATPase superfamily. Kinesin family. KIN-14 subfamily.

The protein is Kinesin-like protein KIN-14E of Oryza sativa subsp. japonica (Rice).